The chain runs to 445 residues: Phosphoglucosamine mutase (445 aa).

The active-site Phosphoserine intermediate is Ser102. Mg(2+) is bound by residues Ser102, Asp241, Asp243, and Asp245. Ser102 carries the phosphoserine modification.

It belongs to the phosphohexose mutase family. Mg(2+) is required as a cofactor. In terms of processing, activated by phosphorylation.

It carries out the reaction alpha-D-glucosamine 1-phosphate = D-glucosamine 6-phosphate. Its function is as follows. Catalyzes the conversion of glucosamine-6-phosphate to glucosamine-1-phosphate. The sequence is that of Phosphoglucosamine mutase from Pectobacterium carotovorum subsp. carotovorum (strain PC1).